The primary structure comprises 252 residues: Imidazole glycerol phosphate synthase subunit HisF (252 aa).

Residues aspartate 11 and aspartate 130 contribute to the active site.

Belongs to the HisA/HisF family. Heterodimer of HisH and HisF.

It is found in the cytoplasm. It catalyses the reaction 5-[(5-phospho-1-deoxy-D-ribulos-1-ylimino)methylamino]-1-(5-phospho-beta-D-ribosyl)imidazole-4-carboxamide + L-glutamine = D-erythro-1-(imidazol-4-yl)glycerol 3-phosphate + 5-amino-1-(5-phospho-beta-D-ribosyl)imidazole-4-carboxamide + L-glutamate + H(+). It participates in amino-acid biosynthesis; L-histidine biosynthesis; L-histidine from 5-phospho-alpha-D-ribose 1-diphosphate: step 5/9. Functionally, IGPS catalyzes the conversion of PRFAR and glutamine to IGP, AICAR and glutamate. The HisF subunit catalyzes the cyclization activity that produces IGP and AICAR from PRFAR using the ammonia provided by the HisH subunit. This Dictyoglomus thermophilum (strain ATCC 35947 / DSM 3960 / H-6-12) protein is Imidazole glycerol phosphate synthase subunit HisF.